We begin with the raw amino-acid sequence, 485 residues long: Ribulose bisphosphate carboxylase large chain (485 aa).

The propeptide occupies 1-2 (MS). N-acetylproline is present on Pro3. At Lys14 the chain carries N6,N6,N6-trimethyllysine. Residues Asn123 and Thr173 each coordinate substrate. The active-site Proton acceptor is Lys175. Lys177 is a substrate binding site. The Mg(2+) site is built by Lys201, Asp203, and Glu204. N6-carboxylysine is present on Lys201. His294 acts as the Proton acceptor in catalysis. Residues Arg295, His327, and Ser379 each contribute to the substrate site.

The protein belongs to the RuBisCO large chain family. Type I subfamily. In terms of assembly, heterohexadecamer of 8 large chains and 8 small chains; disulfide-linked. The disulfide link is formed within the large subunit homodimers. Mg(2+) is required as a cofactor. Post-translationally, the disulfide bond which can form in the large chain dimeric partners within the hexadecamer appears to be associated with oxidative stress and protein turnover.

It is found in the plastid. The protein resides in the chloroplast. The enzyme catalyses 2 (2R)-3-phosphoglycerate + 2 H(+) = D-ribulose 1,5-bisphosphate + CO2 + H2O. The catalysed reaction is D-ribulose 1,5-bisphosphate + O2 = 2-phosphoglycolate + (2R)-3-phosphoglycerate + 2 H(+). Its function is as follows. RuBisCO catalyzes two reactions: the carboxylation of D-ribulose 1,5-bisphosphate, the primary event in carbon dioxide fixation, as well as the oxidative fragmentation of the pentose substrate in the photorespiration process. Both reactions occur simultaneously and in competition at the same active site. The chain is Ribulose bisphosphate carboxylase large chain from Helianthus annuus (Common sunflower).